The primary structure comprises 226 residues: ATP synthase F(0) complex subunit a (226 aa).

6 helical membrane passes run 12-32, 68-88, 97-117, 138-158, 164-184, and 200-222; these read PTMMGLPIVILIIMFPSILFP, WALMLMSLILFIGSTNLLGLL, QLSMNLGMAIPLWAGTVITGF, IPMLVVIETISLFIQPMALAV, ITAGHLLMHLIGGAALALMNI, and TILEFAVALIQAYVFTLLVSLYL.

It belongs to the ATPase A chain family. In terms of assembly, component of the ATP synthase complex composed at least of ATP5F1A/subunit alpha, ATP5F1B/subunit beta, ATP5MC1/subunit c (homooctomer), MT-ATP6/subunit a, MT-ATP8/subunit 8, ATP5ME/subunit e, ATP5MF/subunit f, ATP5MG/subunit g, ATP5MK/subunit k, ATP5MJ/subunit j, ATP5F1C/subunit gamma, ATP5F1D/subunit delta, ATP5F1E/subunit epsilon, ATP5PF/subunit F6, ATP5PB/subunit b, ATP5PD/subunit d, ATP5PO/subunit OSCP. ATP synthase complex consists of a soluble F(1) head domain (subunits alpha(3) and beta(3)) - the catalytic core - and a membrane F(0) domain - the membrane proton channel (subunits c, a, 8, e, f, g, k and j). These two domains are linked by a central stalk (subunits gamma, delta, and epsilon) rotating inside the F1 region and a stationary peripheral stalk (subunits F6, b, d, and OSCP). Interacts with DNAJC30; interaction is direct.

It is found in the mitochondrion inner membrane. The catalysed reaction is H(+)(in) = H(+)(out). In terms of biological role, subunit a, of the mitochondrial membrane ATP synthase complex (F(1)F(0) ATP synthase or Complex V) that produces ATP from ADP in the presence of a proton gradient across the membrane which is generated by electron transport complexes of the respiratory chain. ATP synthase complex consist of a soluble F(1) head domain - the catalytic core - and a membrane F(1) domain - the membrane proton channel. These two domains are linked by a central stalk rotating inside the F(1) region and a stationary peripheral stalk. During catalysis, ATP synthesis in the catalytic domain of F(1) is coupled via a rotary mechanism of the central stalk subunits to proton translocation. With the subunit c (ATP5MC1), forms the proton-conducting channel in the F(0) domain, that contains two crucial half-channels (inlet and outlet) that facilitate proton movement from the mitochondrial intermembrane space (IMS) into the matrix. Protons are taken up via the inlet half-channel and released through the outlet half-channel, following a Grotthuss mechanism. This is ATP synthase F(0) complex subunit a from Felis catus (Cat).